A 341-amino-acid polypeptide reads, in one-letter code: Probable membrane-associated kinase regulator 1 (341 aa).

Disordered stretches follow at residues 1–29, 67–122, 158–185, 206–230, and 288–310; these read MRRQ…FEFN, TLGS…SSRP, PKTN…KRMS, LSPK…NNIR, and RGGF…SVSS. Composition is skewed to low complexity over residues 12-29, 67-108, and 167-180; these read PPQS…FEFN, TLGS…SFPL, and SSSS…APSS. Residues 208–230 are compositionally biased toward polar residues; sequence PKQSSNIKTESSSSLKDSGNNIR. The span at 297 to 310 shows a compositional bias: low complexity; that stretch reads SCSSSSSNNNSVSS.

In terms of assembly, a C-terminus-derived peptide binds BRI1 in vitro.

Its subcellular location is the cell membrane. Functionally, may negatively regulate brassinosteroid signaling. The protein is Probable membrane-associated kinase regulator 1 (MAKR1) of Arabidopsis thaliana (Mouse-ear cress).